Reading from the N-terminus, the 325-residue chain is Bifunctional nuclease 1 (325 aa).

The BFN domain maps to 117 to 252 (CVHNNPQGGH…YLAYSDGMRV (136 aa)). In terms of domain architecture, UVR spans 284–318 (TKEFNILSKMMQAVDEERYDEAAEWRDKLGQFRAK).

Belongs to the bifunctional nuclease family.

It is found in the nucleus. Functionally, bifunctional nuclease with both RNase and DNase activities. Involved in basal defense response. Participates in abscisic acid-derived callose deposition following infection by a necrotrophic pathogen. The protein is Bifunctional nuclease 1 (BBD1) of Arabidopsis thaliana (Mouse-ear cress).